Here is a 706-residue protein sequence, read N- to C-terminus: GDNF-inducible zinc finger protein 1 (706 aa).

In terms of domain architecture, BTB spans 31 to 103; sequence CDVTVSIENQ…VYTAKVRVEE (73 aa). Residues 149 to 165 are compositionally biased toward polar residues; that stretch reads VEASSGPQVSVTPSSKA. 2 disordered regions span residues 149–220 and 242–308; these read VEAS…PKIR and RRLR…KDGE. Basic and acidic residues-rich tracts occupy residues 197 to 212 and 242 to 277; these read PSKK…KDVA and RRLR…EPAA. 10 consecutive C2H2-type zinc fingers follow at residues 315–337, 346–369, 375–398, 405–427, 433–455, 461–483, 489–511, 517–539, 545–567, and 573–595; these read FQCT…IKYH, YRCD…RHVH, FPCE…LQVH, HRCG…ERTH, YGCT…LRVH, FVCD…KRCH, FMCE…NRIH, FKCE…IKVH, YCCD…HRIH, and YMCN…TSIH. The residue at position 611 (serine 611) is a Phosphoserine.

It belongs to the krueppel C2H2-type zinc-finger protein family. As to quaternary structure, interacts with NCL. In terms of tissue distribution, expressed in several tissues, with highest levels in liver. Also expressed in embryos from 7 to 17 dpc.

It is found in the nucleus. The protein localises to the cytoplasm. The protein resides in the nucleolus. Its function is as follows. Transcriptional repressor that binds the GZF1 responsive element (GRE) (consensus: 5'-TGCGCN[TG][CA]TATA-3'). May be regulating VSX2/HOX10 expression. This is GDNF-inducible zinc finger protein 1 from Mus musculus (Mouse).